Here is a 483-residue protein sequence, read N- to C-terminus: Leukocyte immunoglobulin-like receptor subfamily A member 2 (483 aa).

The signal sequence occupies residues 1–23 (MTPILTVLICLGLSLGPRTHVQA). Over 24-449 (GHLPKPTLWA…QHPQDYTVEN (426 aa)) the chain is Extracellular. 4 consecutive Ig-like C2-type domains span residues 27 to 113 (PKPT…DPLE), 117 to 222 (TGAY…GVSK), 224 to 313 (PSLS…DPLD), and 324 to 413 (PSLS…SDPL). Residues Cys-49 and Cys-97 are joined by a disulfide bond. N-linked (GlcNAc...) asparagine glycans are attached at residues Asn-64, Asn-103, and Asn-138. 2 cysteine pairs are disulfide-bonded: Cys-143-Cys-195 and Cys-244-Cys-295. N-linked (GlcNAc...) asparagine glycans are attached at residues Asn-279, Asn-300, and Asn-339. Residues Cys-344 and Cys-395 are joined by a disulfide bond. Tyr-404 carries the 3'-nitrotyrosine modification. An N-linked (GlcNAc...) asparagine glycan is attached at Asn-429. Residues 450-470 (LIRMGVAGLVLVVLGILLFEA) form a helical membrane-spanning segment. The Cytoplasmic segment spans residues 471-483 (QHSQRSLQDAAGR).

As to quaternary structure, homodimer. In terms of tissue distribution, detected on the surface of all peripheral blood monocytes, neutrophils, basophils and eosinophils (at protein level). Expression levels are very low or not detectable on monocytes, T-cells, B-cells, dendritic cells and natural killer (NK) cells.

The protein localises to the cell membrane. It localises to the secreted. In terms of biological role, part of the innate immune responses against microbial infection. Specifically recognizes a set of N-terminally truncated immunoglobulins that are produced via cleavage by proteases from a range of pathogenic bacteria and fungi, including L.pneumophila, M.hyorhinis, S.pneumoniae, S.aureus and C.albicans. Recognizes epitopes that are in part in the variable region of the immunoglobulin light chains, but requires also the constant region for signaling. Binds to a subset of cleaved IgM, IgG3 and IgG4 molecules, but does not bind cleaved IgA1. Binding of N-terminally truncated immunoglobulins mediates activation of neutrophils. In monocytes, activation leads to the release of CSF2, CF3, IL6, CXCL8 and CCL3 and down-regulates responses to bacterial lipopolysaccharide (LPS), possibly via down-regulation of TLR4 expression and reduced signaling via TLR4. In eosinophils, activation by ligand binding leads to the release of RNASE2, IL4 and leukotriene C4. Does not bind class I MHC antigens. The chain is Leukocyte immunoglobulin-like receptor subfamily A member 2 (LILRA2) from Homo sapiens (Human).